The chain runs to 189 residues: Probable thymidylate kinase 1 (189 aa).

Residue 9–16 (GIDGSGKT) coordinates ATP.

This sequence belongs to the thymidylate kinase family.

It carries out the reaction dTMP + ATP = dTDP + ADP. In Saccharolobus solfataricus (strain ATCC 35092 / DSM 1617 / JCM 11322 / P2) (Sulfolobus solfataricus), this protein is Probable thymidylate kinase 1 (tmk1).